The chain runs to 94 residues: Acylphosphatase (94 aa).

Positions 3-90 (RVHVIVEGRV…SDEKQFRIMY (88 aa)) constitute an Acylphosphatase-like domain. Active-site residues include Arg-18 and Asn-36.

Belongs to the acylphosphatase family.

It catalyses the reaction an acyl phosphate + H2O = a carboxylate + phosphate + H(+). The protein is Acylphosphatase (acyP) of Geobacillus kaustophilus (strain HTA426).